A 478-amino-acid polypeptide reads, in one-letter code: MVRIQRGKLLAFCLCVMATVFLLITLQVVVELGKFEGKKFKNSHLKDGHAQMEAEPLHLHPFFNREGLTLNRKKTLAADSFPIMLWWSPLTGETGRLGQCGADACFFTINRTYLHHHRTKAFLFYGTDFSIDSLPLPRKAHHDWALFHEESPKNNYKLFHQPVITLFNYTATFSRHSHLPLTTQYLEGTEVLTSLRHLVPLRSKNHLRKSLAPLVYVQSDCDPPSDRDSYVRELMTYIEVDSYGECLRNKPLPPQLSNPASMDADGFFRILAQYKFILAFENAVCDDYITEKLWRPLKLGVVPVYYGSPSIADWLPSNRSAILVSEFSHPRELASYIRALDRDDRRYQAYIEWKLKGEISNQRLLTALRERKWGVQDVKQDNYIDAFECMVCTKVWDNIRLQEKGLPPKRWQADVTHLSCPEPTVFAFSPLVPRRRSLREMWIPSFQQSKKEARALRWLVDRNQNFSTQEFWALVFKD.

The Cytoplasmic segment spans residues 1 to 9 (MVRIQRGKL). A helical; Signal-anchor for type II membrane protein membrane pass occupies residues 10–30 (LAFCLCVMATVFLLITLQVVV). Residues 31–478 (ELGKFEGKKF…QEFWALVFKD (448 aa)) are Lumenal-facing. 2 N-linked (GlcNAc...) asparagine glycosylation sites follow: N110 and N168. The cysteines at positions 389 and 392 are disulfide-linked.

This sequence belongs to the glycosyltransferase 10 family.

It is found in the endoplasmic reticulum membrane. The catalysed reaction is L-threonyl-[protein] + GDP-beta-L-fucose = 3-O-(alpha-L-fucosyl)-L-threonyl-[protein] + GDP + H(+). It carries out the reaction L-seryl-[protein] + GDP-beta-L-fucose = 3-O-(alpha-L-fucosyl)-L-seryl-[protein] + GDP + H(+). Its pathway is protein modification; protein glycosylation. Protein O-fucosyltransferase that specifically catalyzes O-fucosylation of serine or threonine residues in EMI domains of target proteins, such as MMRN1, MMRN2 and EMID1. Attaches fucose through an O-glycosidic linkage. O-fucosylation of EMI domain-containing proteins may be required for facilitating protein folding and secretion. May also show alpha-(1,3)-fucosyltransferase activity toward the innermost N-acetyl glucosamine (GlcNAc) residue in biantennary N-glycan acceptors. However, this was tested with a library of synthetic substrates and this activity is unsure in vivo. May be involved in biosynthesis of Lewis X-carrying biantennary N-glycans that regulate neuron stem cell self-renewal during brain development. The protein is GDP-fucose protein O-fucosyltransferase 3 (FUT10) of Bos taurus (Bovine).